Here is a 366-residue protein sequence, read N- to C-terminus: L-idonate 5-dehydrogenase (366 aa).

Residues Cys-56, His-81, Cys-111, Cys-114, Cys-117, Cys-125, and Glu-167 each coordinate Zn(2+).

This sequence belongs to the zinc-containing alcohol dehydrogenase family. Zn(2+) serves as cofactor.

It carries out the reaction L-idonate + NAD(+) = 5-dehydro-D-gluconate + NADH + H(+). It participates in carbohydrate acid metabolism; L-idonate degradation. In terms of biological role, involved in the catabolism of ascorbate to tartrate. The enzyme has no activity with NADP(+). This Vitis vinifera (Grape) protein is L-idonate 5-dehydrogenase.